The primary structure comprises 350 residues: FAD:protein FMN transferase (350 aa).

Residues 1-19 (MDMTFFRAALLGACVLLSG) form the signal peptide. Residue cysteine 20 is the site of N-palmitoyl cysteine attachment. Residue cysteine 20 is the site of S-diacylglycerol cysteine attachment. FAD is bound by residues methionine 41, tryptophan 78, 119 to 121 (AMD), and aspartate 181. Threonine 184 contacts Mg(2+). The FAD site is built by glutamate 187 and isoleucine 272. Residues aspartate 298, aspartate 301, and threonine 302 each coordinate Mg(2+).

The protein belongs to the ApbE family. The cofactor is Mg(2+).

It is found in the cell inner membrane. The enzyme catalyses L-threonyl-[protein] + FAD = FMN-L-threonyl-[protein] + AMP + H(+). Functionally, flavin transferase that catalyzes the transfer of the FMN moiety of FAD and its covalent binding to the hydroxyl group of a threonine residue in a target flavoprotein such as NqrB and NqrC, two subunits of the NQR complex. The protein is FAD:protein FMN transferase of Klebsiella pneumoniae (strain 342).